Here is a 58-residue protein sequence, read N- to C-terminus: UPF0434 protein Sfri_2386 (58 aa).

It belongs to the UPF0434 family.

The polypeptide is UPF0434 protein Sfri_2386 (Shewanella frigidimarina (strain NCIMB 400)).